The sequence spans 128 residues: Protein Wnt-10 (128 aa).

5 disulfides stabilise this stretch: C3-C17, C5-C12, C74-C105, C90-C100, and C127-C128. The O-palmitoleoyl serine; by PORCN moiety is linked to residue S9. An N-linked (GlcNAc...) asparagine glycan is attached at N91.

Belongs to the Wnt family. Palmitoleoylation is required for efficient binding to frizzled receptors. Depalmitoleoylation leads to Wnt signaling pathway inhibition. In terms of tissue distribution, in embryo, in dorsal hindbrain; in adults, in brain.

Its subcellular location is the secreted. It localises to the extracellular space. It is found in the extracellular matrix. In terms of biological role, ligand for members of the frizzled family of seven transmembrane receptors. Probable developmental protein. May be a signaling molecule which affects the development of discrete regions of tissues. Is likely to signal over only few cell diameters. The chain is Protein Wnt-10 (wnt10) from Xenopus laevis (African clawed frog).